Here is a 340-residue protein sequence, read N- to C-terminus: Phenylalanine--tRNA ligase alpha subunit (340 aa).

E254 contacts Mg(2+).

Belongs to the class-II aminoacyl-tRNA synthetase family. Phe-tRNA synthetase alpha subunit type 1 subfamily. Tetramer of two alpha and two beta subunits. Mg(2+) serves as cofactor.

It is found in the cytoplasm. It catalyses the reaction tRNA(Phe) + L-phenylalanine + ATP = L-phenylalanyl-tRNA(Phe) + AMP + diphosphate + H(+). In Caldicellulosiruptor bescii (strain ATCC BAA-1888 / DSM 6725 / KCTC 15123 / Z-1320) (Anaerocellum thermophilum), this protein is Phenylalanine--tRNA ligase alpha subunit.